A 255-amino-acid chain; its full sequence is MATQRKHLVKDFNPYITCYICKGYLIKPTTVTECLHTFCKTCIVQHFEDSNDCPRCGNQVHETNPLEMLRLDNTLEEIIFKLVPGLREQLERESEFWKKNKPQENGQDDMSKVDKPKVDEEGDENQDDKDYHRSDPQIAICLDCLRNNGQSGDNVVKGLMKKFIRCSTRVTVGTIKKFLSLKLKLPSSYELDVLCNGEIMGKDHTMEFIYMTRWRLRGENFRCLNCSASQVCSQDGPLYQSYPMVLQYRPRIDFG.

An RING-type zinc finger spans residues 18 to 57 (CYICKGYLIKPTTVTECLHTFCKTCIVQHFEDSNDCPRCG). Residues 97 to 132 (WKKNKPQENGQDDMSKVDKPKVDEEGDENQDDKDYH) are disordered. A compositionally biased stretch (basic and acidic residues) spans 109-119 (DMSKVDKPKVD).

Component of a PRC1-like complex that contains PCGF5, RNF2 and UBE2D3. Interacts with RNF2; the interaction is direct. Interacts with CBX6, CBX7 and CBX8. Interacts with AUTS2; the interaction is direct. Identified in a complex that contains AUTS2, PCGF5, CSNK2B and RNF2.

The protein resides in the nucleus. It is found in the nucleoplasm. In terms of biological role, component of a Polycomb group (PcG) multiprotein PRC1-like complex, a complex class required to maintain the transcriptionally repressive state of many genes, including Hox genes, throughout development. PcG PRC1 complex acts via chromatin remodeling and modification of histones; it mediates monoubiquitination of histone H2A 'Lys-119', rendering chromatin heritably changed in its expressibility. Within the PRC1-like complex, regulates RNF2 ubiquitin ligase activity. Plays a redundant role with PCGF3 as part of a PRC1-like complex that mediates monoubiquitination of histone H2A 'Lys-119' on the X chromosome and is required for normal silencing of one copy of the X chromosome in XX females. The chain is Polycomb group RING finger protein 5 (PCGF5) from Bos taurus (Bovine).